Consider the following 265-residue polypeptide: Glutamate racemase (265 aa).

Residues 13–14 (DS) and 45–46 (YG) each bind substrate. The active-site Proton donor/acceptor is the cysteine 77. Residue 78-79 (NT) coordinates substrate. Cysteine 185 serves as the catalytic Proton donor/acceptor. Residue 186-187 (TH) participates in substrate binding.

This sequence belongs to the aspartate/glutamate racemases family.

It carries out the reaction L-glutamate = D-glutamate. It functions in the pathway cell wall biogenesis; peptidoglycan biosynthesis. Provides the (R)-glutamate required for cell wall biosynthesis. The chain is Glutamate racemase from Vibrio cholerae serotype O1 (strain ATCC 39315 / El Tor Inaba N16961).